A 384-amino-acid chain; its full sequence is Methyl-CpG-binding domain-containing protein 10 (384 aa).

The region spanning 4–74 (TDELVSIELP…SEFEWTTGET (71 aa)) is the MBD domain. A disordered region spans residues 65-384 (SEFEWTTGET…QQGAAASVSC (320 aa)). Residues 80–91 (RISQKVKATTPT) are compositionally biased toward polar residues. A coiled-coil region spans residues 100–224 (KRRSSLTKKD…MEVDTSELEK (125 aa)). 3 stretches are compositionally biased toward basic and acidic residues: residues 106-227 (TKKD…KKAG), 234-250 (EPSK…KEAQ), and 257-269 (DVEK…KTEN). The span at 270 to 284 (KGSVTTEANGEQNVT) shows a compositional bias: polar residues. Positions 295–365 (EADKGKESKE…NDMKAEDTNR (71 aa)) are enriched in basic and acidic residues. Residues 310-356 (TEAEANKENDTQESDEKKTEAAANKENETQESDVKKTEAAVAEEKSN) are a coiled coil. The residue at position 323 (Ser-323) is a Phosphoserine. Over residues 369–384 (ANQVQQQQGAAASVSC) the composition is skewed to low complexity.

Expressed in leaves, buds, flowers, stems and siliques.

It localises to the nucleus. In terms of biological role, probable transcriptional regulator. Required for nucleolar dominance that consist in the silencing of rRNA genes inherited from one progenitor in genetic hybrids. This chain is Methyl-CpG-binding domain-containing protein 10 (MBD10), found in Arabidopsis thaliana (Mouse-ear cress).